A 336-amino-acid polypeptide reads, in one-letter code: MLYRIARAGIFKLDAEKAHDLAIQNFKRFNGTPLDIFYRQNLASKPVEVMGIKFKNPVGLAAGLDKNGECIEAFGAMGFGFVEVGTVTPRPQSGNDKPRLFRLIEAEGIINRMGFNNLGVDNLVENVKKAKYDGVIGINIGKNKDTPIEKGTEDYLICMEKVYQYAGYIAVNISSPNTPGLRTLQYGEALDDLLSQLKEKQKELAEKYGKYVPVALKIAPDLEDDELTQIAESLIKYKIDGVIATNTTLDRSMVEGMKHAEEMGGLSGRPVQTRSTEVVRRLKELLGDNLPIIGVGGIDSYVAAKEKMVAGAELVQVYSGFIYKGPGLVRDIVNNI.

Residues 62–66 (AGLDK) and Thr86 contribute to the FMN site. Lys66 serves as a coordination point for substrate. Residue 111–115 (NRMGF) coordinates substrate. The FMN site is built by Asn139 and Asn172. Asn172 is a binding site for substrate. Ser175 acts as the Nucleophile in catalysis. Residue Asn177 coordinates substrate. FMN is bound by residues Lys217 and Thr245. 246–247 (NT) provides a ligand contact to substrate. FMN-binding positions include Gly268, Gly297, and 318 to 319 (YS).

It belongs to the dihydroorotate dehydrogenase family. Type 2 subfamily. In terms of assembly, monomer. The cofactor is FMN.

Its subcellular location is the cell membrane. It carries out the reaction (S)-dihydroorotate + a quinone = orotate + a quinol. It functions in the pathway pyrimidine metabolism; UMP biosynthesis via de novo pathway; orotate from (S)-dihydroorotate (quinone route): step 1/1. In terms of biological role, catalyzes the conversion of dihydroorotate to orotate with quinone as electron acceptor. In Aliivibrio fischeri (strain ATCC 700601 / ES114) (Vibrio fischeri), this protein is Dihydroorotate dehydrogenase (quinone).